The following is a 67-amino-acid chain: Ranatuerin-2Vb (67 aa).

A signal peptide spans 1–22; the sequence is MFTLKKSFLLLFFLGTITLSLC. Residues 23–39 constitute a propeptide that is removed on maturation; it reads EEERGADDDDGEEEVKR. A disulfide bridge links C62 with C67.

As to expression, expressed by the skin glands.

Its subcellular location is the secreted. Its function is as follows. Antimicrobial peptide. This chain is Ranatuerin-2Vb, found in Odorrana versabilis (Chinese bamboo leaf odorous frog).